The following is a 406-amino-acid chain: Bifunctional enzyme IspD/IspF (406 aa).

The interval 1 to 247 (MSLIRVNGEA…ALFFNPAKDT (247 aa)) is 2-C-methyl-D-erythritol 4-phosphate cytidylyltransferase. A 2-C-methyl-D-erythritol 2,4-cyclodiphosphate synthase region spans residues 248 to 406 (FIGMGFDTHA…HVSMRYKQKL (159 aa)). Positions 254 and 256 each coordinate a divalent metal cation. 4-CDP-2-C-methyl-D-erythritol 2-phosphate contacts are provided by residues 254-256 (DTH) and 280-281 (HS). Residue H288 coordinates a divalent metal cation. 4-CDP-2-C-methyl-D-erythritol 2-phosphate contacts are provided by residues 302-304 (DIG), 307-311 (FPDND), 378-381 (TTME), F385, and K388.

This sequence in the N-terminal section; belongs to the IspD/TarI cytidylyltransferase family. IspD subfamily. In the C-terminal section; belongs to the IspF family. The cofactor is a divalent metal cation.

It carries out the reaction 2-C-methyl-D-erythritol 4-phosphate + CTP + H(+) = 4-CDP-2-C-methyl-D-erythritol + diphosphate. The catalysed reaction is 4-CDP-2-C-methyl-D-erythritol 2-phosphate = 2-C-methyl-D-erythritol 2,4-cyclic diphosphate + CMP. It functions in the pathway isoprenoid biosynthesis; isopentenyl diphosphate biosynthesis via DXP pathway; isopentenyl diphosphate from 1-deoxy-D-xylulose 5-phosphate: step 2/6. The protein operates within isoprenoid biosynthesis; isopentenyl diphosphate biosynthesis via DXP pathway; isopentenyl diphosphate from 1-deoxy-D-xylulose 5-phosphate: step 4/6. Bifunctional enzyme that catalyzes the formation of 4-diphosphocytidyl-2-C-methyl-D-erythritol from CTP and 2-C-methyl-D-erythritol 4-phosphate (MEP) (IspD), and catalyzes the conversion of 4-diphosphocytidyl-2-C-methyl-D-erythritol 2-phosphate (CDP-ME2P) to 2-C-methyl-D-erythritol 2,4-cyclodiphosphate (ME-CPP) with a corresponding release of cytidine 5-monophosphate (CMP) (IspF). The sequence is that of Bifunctional enzyme IspD/IspF from Helicobacter pylori (strain P12).